Here is a 140-residue protein sequence, read N- to C-terminus: Sec-independent protein translocase protein TatB (140 aa).

A helical membrane pass occupies residues 1–21 (MFDIGFSELLLIAVVALVVLG). The disordered stretch occupies residues 119 to 140 (VHVTSPPPSTSTHGNNGQEKSQ). Polar residues predominate over residues 128–140 (TSTHGNNGQEKSQ).

This sequence belongs to the TatB family. The Tat system comprises two distinct complexes: a TatABC complex, containing multiple copies of TatA, TatB and TatC subunits, and a separate TatA complex, containing only TatA subunits. Substrates initially bind to the TatABC complex, which probably triggers association of the separate TatA complex to form the active translocon.

It localises to the cell inner membrane. Part of the twin-arginine translocation (Tat) system that transports large folded proteins containing a characteristic twin-arginine motif in their signal peptide across membranes. Together with TatC, TatB is part of a receptor directly interacting with Tat signal peptides. TatB may form an oligomeric binding site that transiently accommodates folded Tat precursor proteins before their translocation. The chain is Sec-independent protein translocase protein TatB from Xylella fastidiosa (strain 9a5c).